Consider the following 329-residue polypeptide: Ribosomal RNA small subunit methyltransferase H (329 aa).

S-adenosyl-L-methionine is bound by residues 46–48, aspartate 65, phenylalanine 92, aspartate 113, and histidine 120; that span reads GGH. Residues 295–329 form a disordered region; that stretch reads RGAERPSPAEVAANPRAASARLRAAEKIRDTREAA. The span at 317–329 shows a compositional bias: basic and acidic residues; it reads RAAEKIRDTREAA.

Belongs to the methyltransferase superfamily. RsmH family.

It is found in the cytoplasm. The catalysed reaction is cytidine(1402) in 16S rRNA + S-adenosyl-L-methionine = N(4)-methylcytidine(1402) in 16S rRNA + S-adenosyl-L-homocysteine + H(+). Specifically methylates the N4 position of cytidine in position 1402 (C1402) of 16S rRNA. This chain is Ribosomal RNA small subunit methyltransferase H, found in Acidothermus cellulolyticus (strain ATCC 43068 / DSM 8971 / 11B).